Here is a 988-residue protein sequence, read N- to C-terminus: Protein SEMI-ROLLED LEAF 2 (988 aa).

The tract at residues 844–865 is disordered; that stretch reads SVDGGLHESPITNTGSSISKTT. Residues 853–865 show a composition bias toward polar residues; it reads PITNTGSSISKTT.

Expressed in root tips, and in the vascular bundles of leaf blades, leaf sheaths, and roots, especially in their sclerenchymatous cells.

Its subcellular location is the nucleus. The protein localises to the cytoplasm. In terms of biological role, functions in regulating leaf rolling through abaxial side leaf cell differentiation. May be involved in the transdifferentiation process from mesophyll cells to sclerenchymatous cells. The polypeptide is Protein SEMI-ROLLED LEAF 2 (Oryza sativa subsp. japonica (Rice)).